Reading from the N-terminus, the 746-residue chain is NAD(P)H-quinone oxidoreductase subunit 5, chloroplastic (746 aa).

The next 16 helical transmembrane spans lie at 9–29 (WIIP…LLLF), 39–59 (IWTF…LYLS), 89–109 (IDPL…LVLI), 125–145 (FAYM…SNLI), 147–167 (VYFF…FWFT), 185–205 (GDFG…SFEF), 221–241 (VNFF…IAKS), 258–278 (TPIS…FLVA), 280–300 (LLPL…IGII), 327–347 (LGYM…FHLI), 354–374 (ALLF…VGYS), 396–416 (TAFL…CFWS), 425–445 (LLFS…TAFY), 547–567 (ILFP…IGIP), 608–628 (FSVS…KPFY), and 723–743 (YLFF…FFYF).

The protein belongs to the complex I subunit 5 family. In terms of assembly, NDH is composed of at least 16 different subunits, 5 of which are encoded in the nucleus.

The protein resides in the plastid. It is found in the chloroplast thylakoid membrane. It carries out the reaction a plastoquinone + NADH + (n+1) H(+)(in) = a plastoquinol + NAD(+) + n H(+)(out). The enzyme catalyses a plastoquinone + NADPH + (n+1) H(+)(in) = a plastoquinol + NADP(+) + n H(+)(out). NDH shuttles electrons from NAD(P)H:plastoquinone, via FMN and iron-sulfur (Fe-S) centers, to quinones in the photosynthetic chain and possibly in a chloroplast respiratory chain. The immediate electron acceptor for the enzyme in this species is believed to be plastoquinone. Couples the redox reaction to proton translocation, and thus conserves the redox energy in a proton gradient. The sequence is that of NAD(P)H-quinone oxidoreductase subunit 5, chloroplastic (ndhF) from Capsella bursa-pastoris (Shepherd's purse).